Reading from the N-terminus, the 494-residue chain is Guanosine-5'-triphosphate,3'-diphosphate pyrophosphatase (494 aa).

It belongs to the GppA/Ppx family. GppA subfamily.

The catalysed reaction is guanosine 3'-diphosphate 5'-triphosphate + H2O = guanosine 3',5'-bis(diphosphate) + phosphate + H(+). It participates in purine metabolism; ppGpp biosynthesis; ppGpp from GTP: step 2/2. Catalyzes the conversion of pppGpp to ppGpp. Guanosine pentaphosphate (pppGpp) is a cytoplasmic signaling molecule which together with ppGpp controls the 'stringent response', an adaptive process that allows bacteria to respond to amino acid starvation, resulting in the coordinated regulation of numerous cellular activities. The polypeptide is Guanosine-5'-triphosphate,3'-diphosphate pyrophosphatase (Shigella dysenteriae serotype 1 (strain Sd197)).